The primary structure comprises 155 residues: Regulatory protein RecX (155 aa).

It belongs to the RecX family.

It is found in the cytoplasm. Functionally, modulates RecA activity. In Pseudomonas entomophila (strain L48), this protein is Regulatory protein RecX.